Here is an 864-residue protein sequence, read N- to C-terminus: Leucine--tRNA ligase (864 aa).

Positions 57–67 (PYPSGNLHMGH) match the 'HIGH' region motif. Residues 628-632 (KMSKS) carry the 'KMSKS' region motif. Lys-631 contributes to the ATP binding site.

Belongs to the class-I aminoacyl-tRNA synthetase family.

It localises to the cytoplasm. The catalysed reaction is tRNA(Leu) + L-leucine + ATP = L-leucyl-tRNA(Leu) + AMP + diphosphate. This Prochlorococcus marinus (strain MIT 9515) protein is Leucine--tRNA ligase.